Here is a 337-residue protein sequence, read N- to C-terminus: Heme A synthase (337 aa).

5 consecutive transmembrane segments (helical) span residues 6-26 (ITKW…IGGI), 93-113 (GRIT…KDVI), 118-138 (ILPY…GWYM), 154-174 (LAFH…QLIK), and 192-212 (LIFS…GAMV). His256 contributes to the heme binding site. The next 3 helical transmembrane spans lie at 258-278 (LGGY…LKIE), 285-305 (IAYF…ITLL), and 308-328 (VPII…SIII). His316 contacts heme.

This sequence belongs to the COX15/CtaA family. Type 2 subfamily. In terms of assembly, interacts with CtaB. Heme b serves as cofactor.

The protein resides in the cell membrane. The enzyme catalyses Fe(II)-heme o + 2 A + H2O = Fe(II)-heme a + 2 AH2. It participates in porphyrin-containing compound metabolism; heme A biosynthesis; heme A from heme O: step 1/1. Functionally, catalyzes the conversion of heme O to heme A by two successive hydroxylations of the methyl group at C8. The first hydroxylation forms heme I, the second hydroxylation results in an unstable dihydroxymethyl group, which spontaneously dehydrates, resulting in the formyl group of heme A. The protein is Heme A synthase of Rickettsia felis (strain ATCC VR-1525 / URRWXCal2) (Rickettsia azadi).